The sequence spans 312 residues: Olfactory receptor 51B5 (312 aa).

The Extracellular segment spans residues 1–23; it reads MSSSGSSHPFLLTGFPGLEEAHH. The chain crosses the membrane as a helical span at residues 24–44; the sequence is WISVFFLFMYISILFGNGTLL. The Cytoplasmic segment spans residues 45–52; it reads LLIKEDHN. A helical transmembrane segment spans residues 53–73; the sequence is LHEPMYFFLAMLAATDLGLAL. The Extracellular portion of the chain corresponds to 74–97; the sequence is TTMPTVLGVLWLDHREIGSAACFS. A disulfide bond links C95 and C187. Residues 98–118 form a helical membrane-spanning segment; that stretch reads QAYFIHSLSFLESGILLAMAY. The Cytoplasmic segment spans residues 119 to 137; it reads DRFIAICNPLRYTSVLTNT. A helical membrane pass occupies residues 138–158; sequence RVVKIGLGVLMRGFVSVVPPI. Residues 159–194 are Extracellular-facing; the sequence is RPLYFFLYCHSHVLSHAFCLHQDVIKLACADTTFNR. The chain crosses the membrane as a helical span at residues 195-215; that stretch reads LYPAVLVVFIFVLDYLIIFIS. The Cytoplasmic segment spans residues 216–235; that stretch reads YVLILKTVLSIASREERAKA. The chain crosses the membrane as a helical span at residues 236-256; the sequence is LITCVSHICCVLVFYVTVIGL. The Extracellular segment spans residues 257 to 271; it reads SLIHRFGKQVPHIVH. Residues 272–292 traverse the membrane as a helical segment; sequence LIMSYAYFLFPPLMNPITYSV. Residues 293-312 lie on the Cytoplasmic side of the membrane; sequence KTKQIQNAILHLFTTHRIGT.

This sequence belongs to the G-protein coupled receptor 1 family.

The protein localises to the cell membrane. Functionally, odorant receptor. In Homo sapiens (Human), this protein is Olfactory receptor 51B5 (OR51B5).